Consider the following 261-residue polypeptide: MASPDWGYDGENGPEHWGKLYPIANGNNQSPIDIKTSETKRDPSLKPLSVSYNPATAKEIVNVGHSFHVNFEDSDNRSVLKGGPLSESYRLRQFHFHWGITDDCGSEHLVDGAKFSAELHLVHWNSAKYPSFADAASQADGLALIGVLVKVGQANPNLQKVLDALKAVKNKNKKAPFTNFDPSVLLPPSLDYWAYSGSLTHPPLHESVTWIIFKETISVSSEQLAQFRSLLANAEGDREVHIKQNNRPPQPLNGRTVKASF.

Residue Ala-2 is modified to N-acetylalanine. Residues 4 to 261 (PDWGYDGENG…LNGRTVKASF (258 aa)) form the Alpha-carbonic anhydrase domain. Residue His-65 is the Proton donor/acceptor of the active site. Zn(2+)-binding residues include His-95, His-97, and His-120. Residues Thr-200 and 200–201 (TH) contribute to the substrate site.

This sequence belongs to the alpha-carbonic anhydrase family. Requires Zn(2+) as cofactor.

Its subcellular location is the cytoplasm. The catalysed reaction is hydrogencarbonate + H(+) = CO2 + H2O. It catalyses the reaction urea = cyanamide + H2O. Its activity is regulated as follows. Inhibited by acetazolamide. Functionally, catalyzes the reversible hydration of carbon dioxide. Can hydrate cyanamide to urea. In Bos taurus (Bovine), this protein is Carbonic anhydrase 1 (CA1).